A 500-amino-acid polypeptide reads, in one-letter code: L-arabinose isomerase (500 aa).

Mn(2+) contacts are provided by Glu-306, Glu-333, His-350, and His-450.

The protein belongs to the arabinose isomerase family. In terms of assembly, homohexamer. The cofactor is Mn(2+).

It catalyses the reaction beta-L-arabinopyranose = L-ribulose. The protein operates within carbohydrate degradation; L-arabinose degradation via L-ribulose; D-xylulose 5-phosphate from L-arabinose (bacterial route): step 1/3. Its function is as follows. Catalyzes the conversion of L-arabinose to L-ribulose. The protein is L-arabinose isomerase of Shigella flexneri.